A 313-amino-acid chain; its full sequence is Cobalamin biosynthesis protein CobD (313 aa).

5 helical membrane-spanning segments follow: residues 52 to 72 (VAGA…GAAL), 79 to 99 (CWPV…TSLA), 154 to 174 (VVPL…YRAI), 204 to 224 (YVGA…VGGS), and 289 to 309 (AVVL…MLVY).

The protein belongs to the CobD/CbiB family.

The protein resides in the cell membrane. It participates in cofactor biosynthesis; adenosylcobalamin biosynthesis. In terms of biological role, converts cobyric acid to cobinamide by the addition of aminopropanol on the F carboxylic group. This chain is Cobalamin biosynthesis protein CobD, found in Mycobacterium bovis (strain ATCC BAA-935 / AF2122/97).